We begin with the raw amino-acid sequence, 401 residues long: Adenosine 3'-phospho 5'-phosphosulfate transporter 2 (401 aa).

2 N-linked (GlcNAc...) asparagine glycosylation sites follow: Asn12 and Asn71. Helical transmembrane passes span 78 to 98 (LTQF…YGYL), 111 to 131 (YGWY…LIEL), 147 to 167 (MIIA…LGYL), 170 to 190 (PTQV…GVFI), 200 to 220 (VSAA…DSTI), and 223 to 243 (NFNL…AVIG). Asn254 carries an N-linked (GlcNAc...) asparagine glycan. 4 helical membrane-spanning segments follow: residues 267-287 (IGFV…PAVT), 298-317 (GYAF…VLAL), 324-346 (LIAV…IFFA), and 349-369 (FTFQ…LNVY).

The protein belongs to the nucleotide-sugar transporter family. SLC35B subfamily.

It is found in the golgi apparatus membrane. It carries out the reaction 3'-phosphoadenylyl sulfate(in) + adenosine 3',5'-bisphosphate(out) = 3'-phosphoadenylyl sulfate(out) + adenosine 3',5'-bisphosphate(in). Functionally, probably functions as a 3'-phosphoadenylyl sulfate:adenosine 3',5'-bisphosphate antiporter at the Golgi membranes. Mediates the transport from the cytosol into the lumen of the Golgi of 3'-phosphoadenylyl sulfate/adenosine 3'-phospho 5'-phosphosulfate (PAPS), a universal sulfuryl donor for sulfation events that take place in that compartment. This is Adenosine 3'-phospho 5'-phosphosulfate transporter 2 from Pongo abelii (Sumatran orangutan).